The primary structure comprises 413 residues: Ferredoxin--NADP reductase (413 aa).

Residue methionine 1 is modified to N-acetylmethionine. One can recognise a CpcD-like domain in the interval 18–76 (NRLFVYEVIGLSQSTMTDGLDYPIRRSGSTFITVPLKRMNQEMRRITRMGGKIVSIKPL). A disordered region spans residues 74–120 (KPLEGDSPLPHTEGIAKPSQSEGSGSEAVANPAPESNKTMTTTPKEK). A compositionally biased stretch (polar residues) spans 107-116 (PESNKTMTTT). The region spanning 133 to 256 (KTPYIGKVLE…TGPVGKEMLL (124 aa)) is the FAD-binding FR-type domain. FAD-binding positions include 192–195 (RLYS), 213–215 (CVR), tyrosine 219, 230–232 (VCS), and threonine 271. NADP(+) is bound by residues serine 195 and arginine 215. NADP(+)-binding positions include threonine 271, 303-304 (IP), 333-334 (SR), 343-347 (RMYIQ), 372-373 (GL), and glutamate 411.

It belongs to the ferredoxin--NADP reductase type 1 family. In terms of assembly, purifies with both the classic phycobilisome (PBS) supercomplex (CpcG-PBS) and a photosystem I-associated PBS called CpcL-PBS; it accumulates to a higher level in CpcL-PBS. In both PBS it can be cross-linked to both phycocyanin subunits. Requires FAD as cofactor. Acetylated at the N-terminus; 6% of protein in CpcG-PBS and 12% of protein in CpcL-PBS is acetylated.

The protein resides in the cellular thylakoid membrane. It carries out the reaction 2 reduced [2Fe-2S]-[ferredoxin] + NADP(+) + H(+) = 2 oxidized [2Fe-2S]-[ferredoxin] + NADPH. This is Ferredoxin--NADP reductase from Synechocystis sp. (strain ATCC 27184 / PCC 6803 / Kazusa).